The following is a 378-amino-acid chain: O-glycoside alpha-1,2-mannosyltransferase homolog 3 (378 aa).

Topologically, residues 1-6 (MGIPKS) are cytoplasmic. A helical; Signal-anchor for type II membrane protein membrane pass occupies residues 7 to 24 (SIYFCILLFCIISFYLQS). Residues 25–378 (SKDGPKELKV…AIKWLENINS (354 aa)) are Lumenal-facing. Glutamate 276 serves as the catalytic Nucleophile.

This sequence belongs to the glycosyltransferase 15 family.

It localises to the endoplasmic reticulum membrane. The protein resides in the golgi apparatus membrane. Functionally, probable mannosyltransferase involved in O-glycosylation of cell wall and secreted proteins. This Schizosaccharomyces pombe (strain 972 / ATCC 24843) (Fission yeast) protein is O-glycoside alpha-1,2-mannosyltransferase homolog 3 (omh3).